Reading from the N-terminus, the 357-residue chain is Spore wall and anchoring disk complex protein EnP1 (357 aa).

Positions 1 to 16 are cleaved as a signal peptide; the sequence is MKLLGFLIVGLSAISA. N-linked (GlcNAc...) asparagine glycosylation occurs at Asn47. The HBM1 signature appears at 150-158; sequence ERRPHYKKI. The HBM2 signature appears at 329–334; it reads LKKVRG.

The protein localises to the spore wall. The protein resides in the spore. It localises to the perispore. Its function is as follows. Spore wall protein involved in the adhesion to host cells surface glycoaminoglycans (GAGs). Microsporidian spore adherence is an integral part of activation and host cell invasion which requires the extrusion at the spore apex of a very long and coiled structure, the polar tube, through which the sporoplasm is pushed to enter into the potential host cell. This is Spore wall and anchoring disk complex protein EnP1 (EnP1) from Encephalitozoon cuniculi (strain GB-M1) (Microsporidian parasite).